Consider the following 557-residue polypeptide: Aerobic glycerol-3-phosphate dehydrogenase (557 aa).

21-49 (DVVIVGGGITGAGIALDASNRGMKVALVE) provides a ligand contact to FAD.

It belongs to the FAD-dependent glycerol-3-phosphate dehydrogenase family. FAD is required as a cofactor.

It localises to the cytoplasm. It carries out the reaction a quinone + sn-glycerol 3-phosphate = dihydroxyacetone phosphate + a quinol. It participates in polyol metabolism; glycerol degradation via glycerol kinase pathway; glycerone phosphate from sn-glycerol 3-phosphate (aerobic route): step 1/1. The polypeptide is Aerobic glycerol-3-phosphate dehydrogenase (glpD) (Staphylococcus epidermidis (strain ATCC 35984 / DSM 28319 / BCRC 17069 / CCUG 31568 / BM 3577 / RP62A)).